The following is a 490-amino-acid chain: Cobyric acid synthase (490 aa).

Positions 252-439 (RLKVVVPVLP…LHGLFESTAA (188 aa)) constitute a GATase cobBQ-type domain. Catalysis depends on Cys333, which acts as the Nucleophile. The active site involves His431.

The protein belongs to the CobB/CobQ family. CobQ subfamily.

The protein operates within cofactor biosynthesis; adenosylcobalamin biosynthesis. In terms of biological role, catalyzes amidations at positions B, D, E, and G on adenosylcobyrinic A,C-diamide. NH(2) groups are provided by glutamine, and one molecule of ATP is hydrogenolyzed for each amidation. This chain is Cobyric acid synthase, found in Pseudomonas aeruginosa (strain UCBPP-PA14).